A 609-amino-acid chain; its full sequence is Cell division protein DipM (609 aa).

The N-terminal stretch at 1–24 (MRQLWTQAAVIALTAGTLGAPAHA) is a signal peptide. The segment at 21–103 (PAHASGQSGQ…PVLRATPPRT (83 aa)) is disordered. Over residues 25–38 (SGQSGQRFTPNFPI) the composition is skewed to polar residues. Positions 79–93 (LPPPAPVSTPAPAPQ) are enriched in pro residues. LysM domains are found at residues 121 to 165 (QVRV…KIKG) and 171 to 215 (KAYV…KLLL). Composition is skewed to low complexity over residues 242–258 (AEPAPATTRPATPAATP) and 265–280 (PVSEETSEPATTSTTT). The tract at residues 242–280 (AEPAPATTRPATPAATPSRPVRQPVSEETSEPATTSTTT) is disordered. LysM domains lie at 295 to 339 (QVHT…KIKG) and 345 to 389 (KAYS…KIAL). The tract at residues 389 to 457 (LPDGFRDKGP…AAQPITPPPS (69 aa)) is disordered. The span at 400 to 429 (RTTTTTRPATPPANTYARVDSSAAAASTPS) shows a compositional bias: low complexity. Positions 503-603 (NDGLNIRAPQ…VKDKAKPVDP (101 aa)) are lytM.

It is found in the periplasm. Its function is as follows. Required for efficient cell division, cell polarity and normal cell morphology. Facilitates remodeling of the peptidoglycan layer and, thus, coordinated constriction of the cell envelope during the division process. Plays a critical role in maintaining proper cell envelope architecture during growth and division. Required for normal envelope invagination during cell division and to establish or maintain outer membrane connections throughout the cell envelope. May serve as a regulatory hub coordinating the activities of multiple peptidoglycan-degrading enzymes during cell constriction. Required to position SdpA and SdpB at midcell. This chain is Cell division protein DipM, found in Caulobacter vibrioides (strain NA1000 / CB15N) (Caulobacter crescentus).